The sequence spans 124 residues: Fluoride-specific ion channel FluC (124 aa).

4 consecutive transmembrane segments (helical) span residues 3–23 (IIAI…LSIW), 34–54 (YGTL…LVLA), 66–86 (LLIV…SFET), and 100–120 (LYVL…AGVA). 2 residues coordinate Na(+): G74 and T77.

The protein belongs to the fluoride channel Fluc/FEX (TC 1.A.43) family.

It localises to the cell membrane. It catalyses the reaction fluoride(in) = fluoride(out). Na(+) is not transported, but it plays an essential structural role and its presence is essential for fluoride channel function. Its function is as follows. Fluoride-specific ion channel. Important for reducing fluoride concentration in the cell, thus reducing its toxicity. This Roseiflexus sp. (strain RS-1) protein is Fluoride-specific ion channel FluC.